We begin with the raw amino-acid sequence, 602 residues long: Proteasome-associated ATPase (602 aa).

The segment covering 1-13 has biased composition (basic and acidic residues); it reads MQHDLPGGRHDEA. Positions 1–33 are disordered; sequence MQHDLPGGRHDEADSSETGGAGTTENPSSEQAR. The span at 23 to 32 shows a compositional bias: polar residues; the sequence is TTENPSSEQA. The stretch at 28-103 forms a coiled coil; it reads SSEQARQIRF…LREEVDRLAQ (76 aa). 291 to 296 lines the ATP pocket; it reads GCGKTL. The tract at residues 601–602 is docks into pockets in the proteasome alpha-ring; the sequence is YL.

The protein belongs to the AAA ATPase family. Homohexamer. Assembles into a hexameric ring structure that caps the 20S proteasome core. Strongly interacts with the prokaryotic ubiquitin-like protein Pup through a hydrophobic interface; the interacting region of ARC lies in its N-terminal coiled-coil domain. There is one Pup binding site per ARC hexamer ring. Upon ATP-binding, the C-terminus of ARC interacts with the alpha-rings of the proteasome core, possibly by binding to the intersubunit pockets.

The protein operates within protein degradation; proteasomal Pup-dependent pathway. ATPase which is responsible for recognizing, binding, unfolding and translocation of pupylated proteins into the bacterial 20S proteasome core particle. May be essential for opening the gate of the 20S proteasome via an interaction with its C-terminus, thereby allowing substrate entry and access to the site of proteolysis. Thus, the C-termini of the proteasomal ATPase may function like a 'key in a lock' to induce gate opening and therefore regulate proteolysis. The sequence is that of Proteasome-associated ATPase from Saccharomonospora viridis (strain ATCC 15386 / DSM 43017 / JCM 3036 / CCUG 5913 / NBRC 12207 / NCIMB 9602 / P101) (Thermoactinomyces viridis).